Reading from the N-terminus, the 229-residue chain is Matrix protein (229 aa).

Positions 2–4 match the dynamin binding motif; that stretch reads QRL. A PPXY motif motif is present at residues 30–33; sequence PPSY. Positions 42 to 45 match the PTAP/PSAP motif motif; it reads PTAP.

This sequence belongs to the vesiculoviruses matrix protein family. Homomultimer. Interacts with viral nucleocapsid; this interaction contributes to the virion assembly. Interacts with the viral envelope glycoprotein; this interaction contributes to the virion assembly. Interacts with host RAE1-NUP98 complex. Interacts with host NEDD4 and TSG101. Interacts with host dynamin. Interacts with host NDUFAF4; the interaction inhibits viral propagation and is independent of interferon activation. Interacts with host GTF2H5; the interaction may inhibit host transcription. Interacts with host DRG1. Interaction with host CTDNEP1. Interaction with host ABCE1. Phosphorylated by host.

The protein resides in the virion. Its subcellular location is the host endomembrane system. The protein localises to the host nucleus membrane. It localises to the host nucleus. It is found in the host cytoplasm. Its function is as follows. Forms a double layer around the helical nucleocapsid, the inner matrix layer binding to the N helix and the outer matrix layer binding to the envelope glycoprotein. Plays a major role in assembly and budding of virion, by recruiting cellular partners of the ESCRT complexes that play a key role in releasing the budding particle from the host membrane. Condensates the ribonucleocapsid core during virus assembly. Inhibits the host mRNA nuclear export thereby inducing the shut off of cellular transcription and preventing the interferon signaling and the establishment of antiviral state in infected cells. This shutoff presumably inhibits interferon signaling and thus establishment of antiviral state in virus infected cells. Induces cell-rounding, cytoskeleton disorganization and apoptosis in infected cell. Inhibits host transcription, possibly through interaction with host DNA repair factor IIH/TFIIH GTF2H5 subunit. The sequence is that of Matrix protein (M) from Homo sapiens (Human).